The sequence spans 243 residues: MNSSQDTIYAQACENISDFQFDEKVAGVFNDMIRRSVPGYGQIIQTLGELAHKYVTPDSHVYDLGCSLGAATLSIRRKIGSRNCTIIAVDNSQSMIERCQENLGAYVSDTPVDLVCGDIRDIKIENASMVVLNFTMQFLAPNDRDALVNKIYKGLKPGGILVLSEKLNFEDSSVQSLLDDLHLDFKRANGYSELEISQKRSSLEHVMKPDTLAQHEMRLKAQGFTHFNLWFQCFNFASMVAIK.

S-adenosyl-L-methionine-binding positions include Tyr-40, 65–67, 90–91, 118–119, Asn-133, and Arg-200; these read GCS, DN, and DI.

This sequence belongs to the class I-like SAM-binding methyltransferase superfamily. Cx-SAM synthase family. In terms of assembly, homodimer.

It carries out the reaction prephenate + S-adenosyl-L-methionine = carboxy-S-adenosyl-L-methionine + 3-phenylpyruvate + H2O. In terms of biological role, catalyzes the conversion of S-adenosyl-L-methionine (SAM) to carboxy-S-adenosyl-L-methionine (Cx-SAM). The chain is Carboxy-S-adenosyl-L-methionine synthase from Shewanella woodyi (strain ATCC 51908 / MS32).